The following is a 134-amino-acid chain: Cytochrome b5 (134 aa).

A2 is subject to N-acetylalanine. N6-acetyllysine is present on residues K7, K10, and K19. In terms of domain architecture, Cytochrome b5 heme-binding spans 9–85; the sequence is VKYYTLEEIQ…SKTYIIGELH (77 aa). H44 and H68 together coordinate heme. A helical transmembrane segment spans residues 109 to 131; that stretch reads WWTNWVIPAISALVVALMYRLYM.

Belongs to the cytochrome b5 family.

It localises to the endoplasmic reticulum membrane. It is found in the microsome membrane. Its function is as follows. Cytochrome b5 is a membrane-bound hemoprotein functioning as an electron carrier for several membrane-bound oxygenases. It is also involved in several steps of the sterol biosynthesis pathway, particularly in the C-6 double bond introduction during the C-6 desaturation. The chain is Cytochrome b5 (Cyb5a) from Rattus norvegicus (Rat).